A 277-amino-acid polypeptide reads, in one-letter code: Digeranylgeranylglyceryl phosphate synthase (277 aa).

A run of 8 helical transmembrane segments spans residues 16 to 36, 40 to 60, 93 to 113, 129 to 149, 153 to 173, 199 to 218, 222 to 244, and 253 to 273; these read ILAGIVGILGSLVAYEGIPPV, ILIFLVVYFGCSAGNTINDYF, FIGLIIALLLGWSAFLFALGA, FIGNVTVALLTAATPIYGAVG, IDLAGYLAICAFLVNVSREIM, SGIIASIFGFLTIISSFLPV, IGLGYLPIIIVDIMIAKASIDVL, and GQKILKFATFIAVISFLLGAL.

It belongs to the UbiA prenyltransferase family. DGGGP synthase subfamily. Requires Mg(2+) as cofactor.

The protein resides in the cell membrane. The catalysed reaction is sn-3-O-(geranylgeranyl)glycerol 1-phosphate + (2E,6E,10E)-geranylgeranyl diphosphate = 2,3-bis-O-(geranylgeranyl)-sn-glycerol 1-phosphate + diphosphate. Its pathway is membrane lipid metabolism; glycerophospholipid metabolism. Prenyltransferase that catalyzes the transfer of the geranylgeranyl moiety of geranylgeranyl diphosphate (GGPP) to the C2 hydroxyl of (S)-3-O-geranylgeranylglyceryl phosphate (GGGP). This reaction is the second ether-bond-formation step in the biosynthesis of archaeal membrane lipids. This chain is Digeranylgeranylglyceryl phosphate synthase, found in Pyrococcus horikoshii (strain ATCC 700860 / DSM 12428 / JCM 9974 / NBRC 100139 / OT-3).